A 415-amino-acid chain; its full sequence is AP-3 complex subunit mu (415 aa).

Positions 178–414 (SNEVYVDLVE…QTRAGEFDVR (237 aa)) constitute an MHD domain.

This sequence belongs to the adaptor complexes medium subunit family. In terms of assembly, adaptor protein complex 3 (AP-3) is a heterotetramer composed of two large adaptins (delta-type subunit and beta-type subunit), a medium adaptin (mu-type subunit) and a small adaptin (sigma-type subunit).

It localises to the cytoplasm. The protein localises to the golgi apparatus. The protein resides in the cytoplasmic vesicle membrane. Part of the AP-3 complex, an adaptor-related complex which seems to be clathrin-associated. The complex is associated with the Golgi region as well as more peripheral structures. It facilitates the budding of vesicles from the Golgi membrane and may be directly involved in trafficking to the vacuole. It also functions in maintaining the identity of lytic vacuoles and in regulating the transition between storage and lytic vacuoles. The protein is AP-3 complex subunit mu (AP3M) of Arabidopsis thaliana (Mouse-ear cress).